A 403-amino-acid polypeptide reads, in one-letter code: S-adenosylmethionine synthase (403 aa).

Position 17 (His-17) interacts with ATP. Position 19 (Asp-19) interacts with Mg(2+). A K(+)-binding site is contributed by Glu-45. Positions 58 and 104 each coordinate L-methionine. The segment at 104 to 114 (QSPDIAQGVDT) is flexible loop. ATP contacts are provided by residues 179-181 (DGK), 250-251 (KF), Asp-259, 265-266 (RK), Ala-282, and Lys-286. An L-methionine-binding site is contributed by Asp-259. Lys-290 contacts L-methionine.

This sequence belongs to the AdoMet synthase family. As to quaternary structure, homotetramer; dimer of dimers. Requires Mg(2+) as cofactor. K(+) serves as cofactor.

The protein resides in the cytoplasm. The enzyme catalyses L-methionine + ATP + H2O = S-adenosyl-L-methionine + phosphate + diphosphate. The protein operates within amino-acid biosynthesis; S-adenosyl-L-methionine biosynthesis; S-adenosyl-L-methionine from L-methionine: step 1/1. Functionally, catalyzes the formation of S-adenosylmethionine (AdoMet) from methionine and ATP. The overall synthetic reaction is composed of two sequential steps, AdoMet formation and the subsequent tripolyphosphate hydrolysis which occurs prior to release of AdoMet from the enzyme. This Mycobacterium bovis (strain BCG / Pasteur 1173P2) protein is S-adenosylmethionine synthase.